A 310-amino-acid polypeptide reads, in one-letter code: Methionyl-tRNA formyltransferase (310 aa).

109–112 contributes to the (6S)-5,6,7,8-tetrahydrofolate binding site; that stretch reads SLLP.

The protein belongs to the Fmt family.

It carries out the reaction L-methionyl-tRNA(fMet) + (6R)-10-formyltetrahydrofolate = N-formyl-L-methionyl-tRNA(fMet) + (6S)-5,6,7,8-tetrahydrofolate + H(+). Attaches a formyl group to the free amino group of methionyl-tRNA(fMet). The formyl group appears to play a dual role in the initiator identity of N-formylmethionyl-tRNA by promoting its recognition by IF2 and preventing the misappropriation of this tRNA by the elongation apparatus. The protein is Methionyl-tRNA formyltransferase of Pseudomonas putida (strain ATCC 47054 / DSM 6125 / CFBP 8728 / NCIMB 11950 / KT2440).